A 256-amino-acid polypeptide reads, in one-letter code: Dihydroorotate dehydrogenase B (NAD(+)), electron transfer subunit (256 aa).

The region spanning 2–100 (IRLETMKVVA…MGPQGNGFDL (99 aa)) is the FAD-binding FR-type domain. FAD is bound by residues 51–54 (RPIS), 68–70 (IYR), and 75–76 (GT). [2Fe-2S] cluster is bound by residues Cys220, Cys225, Cys228, and Cys243.

The protein belongs to the PyrK family. As to quaternary structure, heterotetramer of 2 PyrK and 2 PyrD type B subunits. The cofactor is [2Fe-2S] cluster. Requires FAD as cofactor.

It functions in the pathway pyrimidine metabolism; UMP biosynthesis via de novo pathway; orotate from (S)-dihydroorotate (NAD(+) route): step 1/1. Functionally, responsible for channeling the electrons from the oxidation of dihydroorotate from the FMN redox center in the PyrD type B subunit to the ultimate electron acceptor NAD(+). This is Dihydroorotate dehydrogenase B (NAD(+)), electron transfer subunit from Streptococcus pneumoniae (strain ATCC BAA-255 / R6).